The chain runs to 324 residues: Methenyltetrahydromethanopterin cyclohydrolase (324 aa).

Belongs to the MCH family.

It localises to the cytoplasm. The enzyme catalyses 5,10-methenyl-5,6,7,8-tetrahydromethanopterin + H2O = N(5)-formyl-5,6,7,8-tetrahydromethanopterin + H(+). It functions in the pathway one-carbon metabolism; formaldehyde degradation; formate from formaldehyde (H(4)MPT route): step 3/5. Catalyzes the hydrolysis of methenyl-H(4)MPT(+) to 5-formyl-H(4)MPT. This is Methenyltetrahydromethanopterin cyclohydrolase from Methylobacterium nodulans (strain LMG 21967 / CNCM I-2342 / ORS 2060).